Here is a 175-residue protein sequence, read N- to C-terminus: Isopentenyl-diphosphate Delta-isomerase (175 aa).

Mn(2+) contacts are provided by His22 and His29. One can recognise a Nudix hydrolase domain in the interval 27–160; the sequence is KLHRAFSVLL…PAAYTPWLAE (134 aa). Cys64 is a catalytic residue. A Mg(2+)-binding site is contributed by Cys64. A Mn(2+)-binding site is contributed by His66. Glu84 provides a ligand contact to Mg(2+). The Mn(2+) site is built by Glu110 and Glu112. Glu112 is a catalytic residue.

This sequence belongs to the IPP isomerase type 1 family. It depends on Mg(2+) as a cofactor. Requires Mn(2+) as cofactor.

The protein localises to the cytoplasm. The enzyme catalyses isopentenyl diphosphate = dimethylallyl diphosphate. It participates in isoprenoid biosynthesis; dimethylallyl diphosphate biosynthesis; dimethylallyl diphosphate from isopentenyl diphosphate: step 1/1. Functionally, catalyzes the 1,3-allylic rearrangement of the homoallylic substrate isopentenyl (IPP) to its highly electrophilic allylic isomer, dimethylallyl diphosphate (DMAPP). The chain is Isopentenyl-diphosphate Delta-isomerase from Nocardia farcinica (strain IFM 10152).